The primary structure comprises 477 residues: Shikimate biosynthesis protein AroDE (477 aa).

Positions 1–209 are 3-dehydroquinate dehydratase; it reads MLCATVSGPS…LEELLSYNYS (209 aa). Residues serine 21, 29-31, and 56-58 contribute to the 3-dehydroquinate site; these read ELR and TFR. Histidine 111 functions as the Proton donor/acceptor; for 3-dehydroquinate dehydratase activity in the catalytic mechanism. Residue lysine 134 is the Schiff-base intermediate with substrate; for 3-dehydroquinate dehydratase activity of the active site. 3-dehydroquinate-binding residues include arginine 172 and glutamine 197. A shikimate 5-dehydrogenase region spans residues 210-477; that stretch reads KLSEKSHIYG…NYVKNFMAKV (268 aa). A shikimate-binding site is contributed by 228-230; that stretch reads SIS. The active-site Proton acceptor; for shikimate dehydrogenase activity is lysine 279. Shikimate contacts are provided by asparagine 300 and aspartate 315. NADP(+)-binding positions include 339-343, 362-364, and glycine 438; these read GAGGA and NRT. Glutamine 445 is a shikimate binding site.

The protein in the N-terminal section; belongs to the type-I 3-dehydroquinase family. In the C-terminal section; belongs to the shikimate dehydrogenase family.

The enzyme catalyses 3-dehydroquinate = 3-dehydroshikimate + H2O. The catalysed reaction is shikimate + NADP(+) = 3-dehydroshikimate + NADPH + H(+). The protein operates within metabolic intermediate biosynthesis; chorismate biosynthesis; chorismate from D-erythrose 4-phosphate and phosphoenolpyruvate: step 3/7. It functions in the pathway metabolic intermediate biosynthesis; chorismate biosynthesis; chorismate from D-erythrose 4-phosphate and phosphoenolpyruvate: step 4/7. Its function is as follows. Bifunctional enzyme that catalyzes two sequential steps of the aromatic amino acids biosynthetic pathway. In the first reaction, the AroD domain catalyzes the cis-dehydration of 3-dehydroquinate (DHQ) and introduces the first double bond of the aromatic ring to yield 3-dehydroshikimate; in the second reaction, the AroE domain catalyzes the reversible NADPH linked reduction of 3-dehydroshikimate (DHSA) to yield shikimate (SA). This Chlamydia pneumoniae (Chlamydophila pneumoniae) protein is Shikimate biosynthesis protein AroDE.